The sequence spans 182 residues: Lipid A acyltransferase PagP (182 aa).

The signal sequence occupies residues 1 to 21 (MTQYFRSLAFFLLPVPATAMA). The N-palmitoyl cysteine moiety is linked to residue cysteine 22. A lipid anchor (S-diacylglycerol cysteine) is attached at cysteine 22. Residues histidine 55, aspartate 98, and serine 99 contribute to the active site.

This sequence belongs to the lipid A palmitoyltransferase family. As to quaternary structure, homodimer.

It is found in the cell outer membrane. It carries out the reaction a lipid A + a 1,2-diacyl-sn-glycero-3-phosphocholine = a hepta-acyl lipid A + a 2-acyl-sn-glycero-3-phosphocholine. The enzyme catalyses a lipid IVA + a 1,2-diacyl-sn-glycero-3-phosphocholine = a lipid IVB + a 2-acyl-sn-glycero-3-phosphocholine. It catalyses the reaction a lipid IIA + a 1,2-diacyl-sn-glycero-3-phosphocholine = a lipid IIB + a 2-acyl-sn-glycero-3-phosphocholine. Transfers a fatty acid residue from the sn-1 position of a phospholipid to the N-linked hydroxyfatty acid chain on the proximal unit of lipid A or its precursors. This Bordetella pertussis (strain CS) protein is Lipid A acyltransferase PagP.